Here is a 239-residue protein sequence, read N- to C-terminus: Ribosomal RNA small subunit methyltransferase G (239 aa).

Residues Gly77, Phe82, 128–129, and Arg147 each bind S-adenosyl-L-methionine; that span reads AE.

The protein belongs to the methyltransferase superfamily. RNA methyltransferase RsmG family.

The protein resides in the cytoplasm. Functionally, specifically methylates the N7 position of guanine in position 535 of 16S rRNA. The polypeptide is Ribosomal RNA small subunit methyltransferase G (Bacillus mycoides (strain KBAB4) (Bacillus weihenstephanensis)).